A 254-amino-acid chain; its full sequence is Serine acetyltransferase (254 aa).

Belongs to the transferase hexapeptide repeat family.

It is found in the cytoplasm. The catalysed reaction is L-serine + acetyl-CoA = O-acetyl-L-serine + CoA. It participates in amino-acid biosynthesis; L-cysteine biosynthesis; L-cysteine from L-serine: step 1/2. The polypeptide is Serine acetyltransferase (cysE) (Buchnera aphidicola subsp. Baizongia pistaciae (strain Bp)).